Consider the following 177-residue polypeptide: Anti-apoptotic protein NR13 (177 aa).

A BH1 motif is present at residues Leu75–Gly94. A helical transmembrane segment spans residues Leu86–Glu106. The short motif at Glu126 to Phe141 is the BH2 element. A helical transmembrane segment spans residues Ser156–Val176.

The protein belongs to the Bcl-2 family. In terms of assembly, interacts with BAX. As to expression, mainly expressed in neural and muscular tissues.

It is found in the cell membrane. In terms of biological role, shows anti-apoptotic properties. Counteract the pro-apoptotic activity of BAX. In Coturnix japonica (Japanese quail), this protein is Anti-apoptotic protein NR13 (NR13).